The primary structure comprises 262 residues: Acyl-[acyl-carrier-protein]--UDP-N-acetylglucosamine O-acyltransferase (262 aa).

Belongs to the transferase hexapeptide repeat family. LpxA subfamily. In terms of assembly, homotrimer.

Its subcellular location is the cytoplasm. The catalysed reaction is a (3R)-hydroxyacyl-[ACP] + UDP-N-acetyl-alpha-D-glucosamine = a UDP-3-O-[(3R)-3-hydroxyacyl]-N-acetyl-alpha-D-glucosamine + holo-[ACP]. The protein operates within glycolipid biosynthesis; lipid IV(A) biosynthesis; lipid IV(A) from (3R)-3-hydroxytetradecanoyl-[acyl-carrier-protein] and UDP-N-acetyl-alpha-D-glucosamine: step 1/6. Its function is as follows. Involved in the biosynthesis of lipid A, a phosphorylated glycolipid that anchors the lipopolysaccharide to the outer membrane of the cell. The protein is Acyl-[acyl-carrier-protein]--UDP-N-acetylglucosamine O-acyltransferase of Vibrio cholerae serotype O1 (strain ATCC 39541 / Classical Ogawa 395 / O395).